We begin with the raw amino-acid sequence, 326 residues long: tRNA-dihydrouridine(16) synthase (326 aa).

Residues Pro-8–Glu-10 and Gln-69 contribute to the FMN site. Cys-99 serves as the catalytic Proton donor. FMN contacts are provided by residues Lys-140, Asn-200–Glu-202, and Gly-224–Arg-225.

The protein belongs to the Dus family. DusC subfamily. FMN serves as cofactor.

It carries out the reaction 5,6-dihydrouridine(16) in tRNA + NADP(+) = uridine(16) in tRNA + NADPH + H(+). The enzyme catalyses 5,6-dihydrouridine(16) in tRNA + NAD(+) = uridine(16) in tRNA + NADH + H(+). Catalyzes the synthesis of 5,6-dihydrouridine (D), a modified base found in the D-loop of most tRNAs, via the reduction of the C5-C6 double bond in target uridines. Specifically modifies U16 in tRNAs. The sequence is that of tRNA-dihydrouridine(16) synthase from Ralstonia nicotianae (strain ATCC BAA-1114 / GMI1000) (Ralstonia solanacearum).